The primary structure comprises 211 residues: Large ribosomal subunit protein eL13 (211 aa).

N6-acetyllysine is present on lysine 16. 2 positions are modified to phosphoserine: serine 52 and serine 77. Residues lysine 123 and lysine 145 each participate in a glycyl lysine isopeptide (Lys-Gly) (interchain with G-Cter in SUMO2) cross-link. Residue lysine 174 forms a Glycyl lysine isopeptide (Lys-Gly) (interchain with G-Cter in SUMO1); alternate linkage. Glycyl lysine isopeptide (Lys-Gly) (interchain with G-Cter in SUMO2); alternate cross-links involve residues lysine 174 and lysine 177. Lysine 177 carries the N6-acetyllysine; alternate modification.

This sequence belongs to the eukaryotic ribosomal protein eL13 family. In terms of assembly, component of the 60S large ribosomal subunit (LSU).

It localises to the cytoplasm. Functionally, component of the ribosome, a large ribonucleoprotein complex responsible for the synthesis of proteins in the cell. The small ribosomal subunit (SSU) binds messenger RNAs (mRNAs) and translates the encoded message by selecting cognate aminoacyl-transfer RNA (tRNA) molecules. The large subunit (LSU) contains the ribosomal catalytic site termed the peptidyl transferase center (PTC), which catalyzes the formation of peptide bonds, thereby polymerizing the amino acids delivered by tRNAs into a polypeptide chain. The nascent polypeptides leave the ribosome through a tunnel in the LSU and interact with protein factors that function in enzymatic processing, targeting, and the membrane insertion of nascent chains at the exit of the ribosomal tunnel. As part of the LSU, it is probably required for its formation and the maturation of rRNAs. Plays a role in bone development. The protein is Large ribosomal subunit protein eL13 (RPL13) of Bos taurus (Bovine).